We begin with the raw amino-acid sequence, 165 residues long: Large ribosomal subunit protein uL10 (165 aa).

This sequence belongs to the universal ribosomal protein uL10 family. As to quaternary structure, part of the ribosomal stalk of the 50S ribosomal subunit. The N-terminus interacts with L11 and the large rRNA to form the base of the stalk. The C-terminus forms an elongated spine to which L12 dimers bind in a sequential fashion forming a multimeric L10(L12)X complex.

Forms part of the ribosomal stalk, playing a central role in the interaction of the ribosome with GTP-bound translation factors. This Pectobacterium carotovorum subsp. carotovorum (strain PC1) protein is Large ribosomal subunit protein uL10.